The chain runs to 229 residues: Peptidase E (229 aa).

Residues Ser120, Asp135, and His157 each act as charge relay system in the active site.

The protein belongs to the peptidase S51 family.

It localises to the cytoplasm. The enzyme catalyses Dipeptidase E catalyzes the hydrolysis of dipeptides Asp-|-Xaa. It does not act on peptides with N-terminal Glu, Asn or Gln, nor does it cleave isoaspartyl peptides.. In terms of biological role, hydrolyzes dipeptides containing N-terminal aspartate residues. May play a role in allowing the cell to use peptide aspartate to spare carbon otherwise required for the synthesis of the aspartate family of amino acids. The sequence is that of Peptidase E from Salmonella schwarzengrund (strain CVM19633).